The chain runs to 324 residues: IDS-like terpene synthase 1 (324 aa).

Asp-77 and Asp-81 together coordinate Mg(2+).

It belongs to the FPP/GGPP synthase family. It depends on Mg(2+) as a cofactor.

It catalyses the reaction (2E)-geranyl diphosphate = (E)-beta-ocimene + diphosphate. The enzyme catalyses (2E)-geranyl diphosphate + H2O = linalool + diphosphate. The catalysed reaction is (2E,6E)-farnesyl diphosphate = (3E,6E)-alpha-farnesene + diphosphate. It carries out the reaction (2E,6E,10E)-geranylgeranyl diphosphate = (E,E,E)-alpha-springene + diphosphate. Its function is as follows. Terpene synthase that shows monoterpene synthase activity and produces (E)-beta-ocimene as a major product and linalool as a minor product, using geranyl diphosphate (GPP) as substrate. Also shows sesquiterpene synthase activity as it is able to convert farnesyl diphosphate (FPP) into (E,E)-alpha-farnesene. Finally, TPS1 can convert geranylgeranyl diphosphate into (E,E,E)-alpha-springene. This chain is IDS-like terpene synthase 1, found in Melampsora larici-populina (strain 98AG31 / pathotype 3-4-7) (Poplar leaf rust fungus).